The primary structure comprises 77 residues: Large ribosomal subunit protein bL28 (77 aa).

It belongs to the bacterial ribosomal protein bL28 family.

The protein is Large ribosomal subunit protein bL28 of Albidiferax ferrireducens (strain ATCC BAA-621 / DSM 15236 / T118) (Rhodoferax ferrireducens).